Consider the following 776-residue polypeptide: Palmitoyltransferase AKR1 (776 aa).

The Cytoplasmic segment spans residues 1–311 (MDQEMTTVAS…MEGKLGPRNT (311 aa)). Residues 38 to 58 (RLDEGSSIRGGELERDSQEVG) form a disordered region. ANK repeat units lie at residues 68 to 97 (CHDL…SLNL), 103 to 132 (QDVT…DIDA), 137 to 166 (LKAT…DPNI), 170 to 199 (QGFN…AIDE), 203 to 232 (DGHT…SVNS), and 236 to 265 (AGMT…SLDA). The chain crosses the membrane as a helical span at residues 312–332 (ILAIFLLPIAVLWLIFSTFKW). Topologically, residues 333-336 (LPVY) are lumenal. A helical membrane pass occupies residues 337-357 (VGVPFAIAEFMGMQYTVVLVL). The Cytoplasmic portion of the chain corresponds to 358 to 368 (LGHIKAQDKVS). The chain crosses the membrane as a helical span at residues 369 to 389 (TSNYFASIITASLIWVGYCWI). Residues 390–402 (SRFAVNTPGYAFS) are Lumenal-facing. The chain crosses the membrane as a helical span at residues 403-423 (NLGFIIMFVGCCWTFWTAIVT). Residues 424 to 498 (DPGFVPKGQQ…NCVGAKNHRS (75 aa)) are Cytoplasmic-facing. A DHHC domain is found at 454 to 504 (NFCIVCMARKPLRSKHCRTCNRCVARFDHHCPWIWNCVGAKNHRSFLLFVL). The S-palmitoyl cysteine intermediate role is filled by Cys-484. A helical transmembrane segment spans residues 499–519 (FLLFVLFLIGGIILFIRLTIA). The Lumenal portion of the chain corresponds to 520–553 (YIQQNAPEYIPTPNPGLTTCDISTTLCQAGDFDP). A helical transmembrane segment spans residues 554 to 574 (FLLCMALWSTLQLTWTSVLAI). Residues 575 to 776 (SHLWQVSRQM…RYEVVSEQEV (202 aa)) lie on the Cytoplasmic side of the membrane. The segment at 628 to 665 (GAGEEAAGPPGAEAGPEGNALLPPPGGHVHGPQCRHGD) is disordered. Over residues 629 to 645 (AGEEAAGPPGAEAGPEG) the composition is skewed to low complexity.

This sequence belongs to the DHHC palmitoyltransferase family. AKR/ZDHHC17 subfamily.

Its subcellular location is the early endosome membrane. It localises to the golgi apparatus membrane. It carries out the reaction L-cysteinyl-[protein] + hexadecanoyl-CoA = S-hexadecanoyl-L-cysteinyl-[protein] + CoA. Its function is as follows. Palmitoyltransferase specific for casein kinase 1. This chain is Palmitoyltransferase AKR1 (AKR1), found in Cryptococcus neoformans var. neoformans serotype D (strain B-3501A) (Filobasidiella neoformans).